A 334-amino-acid chain; its full sequence is Probable prephenate dehydratase (334 aa).

In terms of domain architecture, Prephenate dehydratase spans 7–224 (RVLFLGPKGT…NTTRFLVLKR (218 aa)). Residues 244-322 (LTFTTRQDDP…SDKSKQWCLW (79 aa)) enclose the ACT domain.

It localises to the cytoplasm. It carries out the reaction prephenate + H(+) = 3-phenylpyruvate + CO2 + H2O. It functions in the pathway amino-acid biosynthesis; L-phenylalanine biosynthesis; phenylpyruvate from prephenate: step 1/1. Its function is as follows. Catayzes the decarboxylation/dehydration of prephenate to phenylpyruvate. This chain is Probable prephenate dehydratase (PHA2), found in Saccharomyces cerevisiae (strain ATCC 204508 / S288c) (Baker's yeast).